We begin with the raw amino-acid sequence, 91 residues long: ATP-dependent Clp protease adapter protein ClpS (91 aa).

It belongs to the ClpS family. Binds to the N-terminal domain of the chaperone ClpA.

Functionally, involved in the modulation of the specificity of the ClpAP-mediated ATP-dependent protein degradation. This is ATP-dependent Clp protease adapter protein ClpS from Synechococcus sp. (strain ATCC 27144 / PCC 6301 / SAUG 1402/1) (Anacystis nidulans).